A 1345-amino-acid chain; its full sequence is MAPEASPERSCSLHTCPLEDPTGAPVPPPTVSTLQAIDPTSPLTAGHFAFPRAPQDYQEGSSLLGLGDQASLCAHVSNLSTSIDTSQHDGVWKQPSVQRHVVSVRQERTFRMPKSYSHMIADWPVAVIVGCLAFIFLCTLAGLLGSPPLDFSEPLLGFEPRDTEIGRRLEVWKAMQALTGPKNLLSLSPDPEMNSSSLLSTLSPAAWGRAEESVVRTKRMVGPVEVKEEENFFCGRPEKSHAKLVFVSTSGGSLWNLQAIHSMCRIEQEQIRSHISFGALCQRSAANECCPSWSLGNYLAVLSNRSSCQDTTQADTDRTLALLRFCATFYHRGVLVPACVGSSQDKPPFCAQVPAKCTGSNVVYEFLHYLLDRDFLSPQTADYQVPSLKFALLFLPIIKTSSLLDIYLDGLGDPIKVSDNYTSISGMDLGLKPRLLKYYLAEDTMYPLIALVVIFFGMSLYLRSLFITFMSLLGVLGSLMVAYFLYHVAFRMAYFPFVNLAALLLLSGVCVNYTLIFLDMWRLSRGQVPSGGMPHRVGRTMHHFGYLLLVSGLTTSAAFYGSYLSRLPAVRCFALFMGTAVLVHMGLTLLWLPATVVLHERYLAHGCVAQAHGQRGGSDPLRLLLALHRRIRIFRKIISILSRLLFQRLLPCGVIKFRYIWICWFAALAAGGAYIGGVSPRLQLPILLPLGGQFFRSSHPFERFDAEYRQQFLFEDLPPNEGGNLPVVLVWGILPVDTSDPLDPRTNSSVVSDPDFSPSSPEAQEWLLALCHGAQNQSFFGDQPEGWPTLCLVEALQQWMESPSCGRLGPDLCCGQSEFPWAPQLYLHCLKMMALEQSPDGTRDLGLRFDTHGNLAALVLKFQTNLPYSTEYGPVHHFYTEISRWLSTEMSKAPPGLNQGWFTSNLELYSLQHSLSTEPAVVLGLALALAFATLLLSTWNVPLSLFSVAAVAGTVLLTVGLLVLLEWQLNTAEALFLSASVGLSVDLTINYCISYHLCPHPDRLSRVAFSLRQISRATAMTTGVLFASGVIMLPSTILLYRKLGIIVMMVKFLGCGFASFFFQSLCCFFGPEKNCGQILWPCAHLPWDAGTEDPDEKGRAGPPGFSEHYELQPLARRRSPSFDTSTATSKLSHRPSILSEDLQIHDGSCCLQHAQAPVSPRDLLLDHQTVFSQCPALQTSSPYKQAGPTPQTWIRQDSQGQKTEPLQALPEGPAHCPKSKVEELPDGLCSSASTLEGLSVSDDTCASEHSVRVPDSVGTSPEVMNGTGHPILERGQLNGKRDTLWLALKETIYDPNMPNSHHSSLSWKGRGGPGDISPVMLPNSQPDLPDVWLRRPSTYTSGYSS.

Residues 1-28 (MAPEASPERSCSLHTCPLEDPTGAPVPP) form a disordered region. The helical transmembrane segment at 125–145 (VAVIVGCLAFIFLCTLAGLLG) threads the bilayer. Residues asparagine 304 and asparagine 420 are each glycosylated (N-linked (GlcNAc...) asparagine). Residues 429-598 (LGLKPRLLKY…LLWLPATVVL (170 aa)) enclose the SSD domain. 6 helical membrane-spanning segments follow: residues 440-460 (LAED…GMSL), 465-485 (LFIT…AYFL), 497-517 (FVNL…TLIF), 544-564 (FGYL…GSYL), 572-592 (CFAL…LLWL), and 659-679 (YIWI…GGVS). Residue asparagine 776 is glycosylated (N-linked (GlcNAc...) asparagine). The next 5 membrane-spanning stretches (helical) occupy residues 919 to 939 (PAVV…LSTW), 945 to 965 (LFSV…LVLL), 974 to 994 (ALFL…YCIS), 1019 to 1039 (AMTT…TILL), and 1043 to 1063 (LGII…FFFQ). 2 disordered regions span residues 1251–1271 (VRVP…GHPI) and 1295–1345 (PNMP…GYSS). Positions 1297–1306 (MPNSHHSSLS) are enriched in polar residues. Position 1310 is an omega-N-methylarginine (arginine 1310).

It belongs to the dispatched family.

It localises to the membrane. The chain is Protein dispatched homolog 2 (Disp2) from Mus musculus (Mouse).